The following is an 860-amino-acid chain: LPS-assembly protein LptD (860 aa).

The N-terminal stretch at 1–21 is a signal peptide; sequence MTKRYFSLLAVCSAIATSTFA.

Belongs to the LptD family. Component of the lipopolysaccharide transport and assembly complex. Interacts with LptE and LptA.

It is found in the cell outer membrane. In terms of biological role, together with LptE, is involved in the assembly of lipopolysaccharide (LPS) at the surface of the outer membrane. The polypeptide is LPS-assembly protein LptD (Saccharophagus degradans (strain 2-40 / ATCC 43961 / DSM 17024)).